A 415-amino-acid chain; its full sequence is Peptide chain release factor subunit 1 (415 aa).

The protein belongs to the eukaryotic release factor 1 family. As to quaternary structure, heterodimer of two subunits, one of which binds GTP.

It is found in the cytoplasm. Functionally, directs the termination of nascent peptide synthesis (translation) in response to the termination codons UAA, UAG and UGA. This is Peptide chain release factor subunit 1 from Thermococcus onnurineus (strain NA1).